The sequence spans 383 residues: Cytochrome b (383 aa).

Transmembrane regions (helical) follow at residues 31-51 (FGSL…FLAM), 75-97 (WLMR…VHIF), 112-132 (LWCS…MGYV), and 178-198 (FFSL…IHLI). Heme b-binding residues include His81 and His95. Residues His182 and His196 each contribute to the heme b site. His201 contacts a ubiquinone. A run of 4 helical transmembrane segments spans residues 224 to 244 (FYTK…IFIF), 288 to 308 (IGGV…PFTN), 320 to 340 (IFKV…WVGQ), and 347 to 367 (YTEI…IIIP).

Belongs to the cytochrome b family. As to quaternary structure, fungal cytochrome b-c1 complex contains 10 subunits; 3 respiratory subunits, 2 core proteins and 5 low-molecular weight proteins. Cytochrome b-c1 complex is a homodimer. Heme b serves as cofactor.

The protein resides in the mitochondrion inner membrane. Functionally, component of the ubiquinol-cytochrome c reductase complex (complex III or cytochrome b-c1 complex) that is part of the mitochondrial respiratory chain. The b-c1 complex mediates electron transfer from ubiquinol to cytochrome c. Contributes to the generation of a proton gradient across the mitochondrial membrane that is then used for ATP synthesis. In Phytophthora megasperma (Potato pink rot fungus), this protein is Cytochrome b (cob).